We begin with the raw amino-acid sequence, 122 residues long: Large ribosomal subunit protein bL12 (122 aa).

This sequence belongs to the bacterial ribosomal protein bL12 family. Homodimer. Part of the ribosomal stalk of the 50S ribosomal subunit. Forms a multimeric L10(L12)X complex, where L10 forms an elongated spine to which 2 to 4 L12 dimers bind in a sequential fashion. Binds GTP-bound translation factors.

Functionally, forms part of the ribosomal stalk which helps the ribosome interact with GTP-bound translation factors. Is thus essential for accurate translation. The protein is Large ribosomal subunit protein bL12 of Staphylococcus epidermidis (strain ATCC 35984 / DSM 28319 / BCRC 17069 / CCUG 31568 / BM 3577 / RP62A).